The chain runs to 604 residues: uncharacterized protein (604 aa).

Residues 1-40 form the signal peptide; it reads MWLQQRIKVFPGLLSSSWARRVLAVSGFLVIIYWYIFSGS. Residues 41-563 are Extracellular-facing; sequence HYRSFWYSGK…EEHMAKQYRG (523 aa). Residue N337 is glycosylated (N-linked (GlcNAc...) asparagine). The chain crosses the membrane as a helical span at residues 564 to 584; sequence LPFLFWFSVASLITLFHLFLF. The Cytoplasmic segment spans residues 585-604; it reads KLIYNEYCGPGAKPLFRSKV.

Its subcellular location is the membrane. This is an uncharacterized protein from Xenopus laevis (African clawed frog).